The chain runs to 264 residues: Formamidopyrimidine-DNA glycosylase (264 aa).

Residue Pro-2 is the Schiff-base intermediate with DNA of the active site. The active-site Proton donor is the Glu-3. Catalysis depends on Lys-58, which acts as the Proton donor; for beta-elimination activity. His-89, Arg-107, and Arg-144 together coordinate DNA. An FPG-type zinc finger spans residues Arg-229–Lys-263. Arg-253 (proton donor; for delta-elimination activity) is an active-site residue.

It belongs to the FPG family. Monomer. It depends on Zn(2+) as a cofactor.

It carries out the reaction Hydrolysis of DNA containing ring-opened 7-methylguanine residues, releasing 2,6-diamino-4-hydroxy-5-(N-methyl)formamidopyrimidine.. The enzyme catalyses 2'-deoxyribonucleotide-(2'-deoxyribose 5'-phosphate)-2'-deoxyribonucleotide-DNA = a 3'-end 2'-deoxyribonucleotide-(2,3-dehydro-2,3-deoxyribose 5'-phosphate)-DNA + a 5'-end 5'-phospho-2'-deoxyribonucleoside-DNA + H(+). Involved in base excision repair of DNA damaged by oxidation or by mutagenic agents. Acts as a DNA glycosylase that recognizes and removes damaged bases. Has a preference for oxidized purines, such as 7,8-dihydro-8-oxoguanine (8-oxoG). Has AP (apurinic/apyrimidinic) lyase activity and introduces nicks in the DNA strand. Cleaves the DNA backbone by beta-delta elimination to generate a single-strand break at the site of the removed base with both 3'- and 5'-phosphates. This chain is Formamidopyrimidine-DNA glycosylase, found in Solibacter usitatus (strain Ellin6076).